The chain runs to 431 residues: Glucose-1-phosphate adenylyltransferase (431 aa).

Lys-39 lines the beta-D-fructose 1,6-bisphosphate pocket. Residues Arg-40, His-46, and Arg-52 each coordinate AMP. Tyr-114 serves as a coordination point for alpha-D-glucose 1-phosphate. Residue Arg-130 coordinates AMP. Residues Gly-179, 194–195 (EK), and Ser-212 each bind alpha-D-glucose 1-phosphate. Residues Glu-370 and Arg-386 each coordinate AMP. Beta-D-fructose 1,6-bisphosphate contacts are provided by residues 419–423 (REMLR) and 429–431 (QER).

The protein belongs to the bacterial/plant glucose-1-phosphate adenylyltransferase family. In terms of assembly, homotetramer.

It catalyses the reaction alpha-D-glucose 1-phosphate + ATP + H(+) = ADP-alpha-D-glucose + diphosphate. It functions in the pathway glycan biosynthesis; glycogen biosynthesis. Its activity is regulated as follows. Allosterically activated by fructose-1,6-bisphosphate (F16BP) and inhibited by AMP. In terms of biological role, involved in the biosynthesis of ADP-glucose, a building block required for the elongation reactions to produce glycogen. Catalyzes the reaction between ATP and alpha-D-glucose 1-phosphate (G1P) to produce pyrophosphate and ADP-Glc. This Escherichia coli O7:K1 (strain IAI39 / ExPEC) protein is Glucose-1-phosphate adenylyltransferase.